We begin with the raw amino-acid sequence, 125 residues long: Probable mercury resistance operon repressor (125 aa).

One can recognise an HTH arsR-type domain in the interval 15–109 (VPCTHPDTTA…LARCLAADNA (95 aa)). Positions 49–68 (SAECVEHAGISQPRVSVHLS) form a DNA-binding region, H-T-H motif. Hg(2+) is bound by residues Cys69, Cys73, and Cys114.

Its function is as follows. Negatively regulates the mercuric reductase merA and the organolyase merB in the absence of mercuric ions. The polypeptide is Probable mercury resistance operon repressor (merR) (Streptomyces lividans).